Consider the following 80-residue polypeptide: Large ribosomal subunit protein uL24 (80 aa).

The protein belongs to the universal ribosomal protein uL24 family. Part of the 50S ribosomal subunit.

In terms of biological role, one of two assembly initiator proteins, it binds directly to the 5'-end of the 23S rRNA, where it nucleates assembly of the 50S subunit. Functionally, one of the proteins that surrounds the polypeptide exit tunnel on the outside of the subunit. The protein is Large ribosomal subunit protein uL24 of Chlorobium phaeobacteroides (strain BS1).